Here is a 222-residue protein sequence, read N- to C-terminus: Sigma non-opioid intracellular receptor 1 (222 aa).

The Lumenal segment spans residues 1-7 (MGVAGPW). Residues 8 to 29 (VLRVGLGLGAFALLLQGLRGWL) form a helical membrane-spanning segment. At 30–222 (ACKRYEFQPA…ASAFFSTLGC (193 aa)) the chain is on the cytoplasmic side. The interval 98-105 (SLTEYVLL) is important for ligand-binding. The interval 176–222 (FVPSTLAFALADTLFSTQDFITLFYTLRAYTKGLLLEASAFFSTLGC) is C-terminal hydrophobic region.

Belongs to the ERG2 family. Homotrimer.

It is found in the nucleus inner membrane. Its subcellular location is the nucleus outer membrane. The protein localises to the nucleus envelope. It localises to the cytoplasmic vesicle. The protein resides in the endoplasmic reticulum membrane. It is found in the membrane. Its function is as follows. May function in lipid transport from the endoplasmic reticulum and be involved in a wide array of cellular functions probably through regulation of the biogenesis of lipid microdomains at the plasma membrane. May regulate calcium efflux at the endoplasmic reticulum. The chain is Sigma non-opioid intracellular receptor 1 (SIGMAR1) from Gallus gallus (Chicken).